The chain runs to 235 residues: Aspartate/glutamate leucyltransferase (235 aa).

The protein belongs to the R-transferase family. Bpt subfamily.

Its subcellular location is the cytoplasm. It carries out the reaction N-terminal L-glutamyl-[protein] + L-leucyl-tRNA(Leu) = N-terminal L-leucyl-L-glutamyl-[protein] + tRNA(Leu) + H(+). The enzyme catalyses N-terminal L-aspartyl-[protein] + L-leucyl-tRNA(Leu) = N-terminal L-leucyl-L-aspartyl-[protein] + tRNA(Leu) + H(+). Its function is as follows. Functions in the N-end rule pathway of protein degradation where it conjugates Leu from its aminoacyl-tRNA to the N-termini of proteins containing an N-terminal aspartate or glutamate. This chain is Aspartate/glutamate leucyltransferase, found in Pseudomonas fluorescens (strain Pf0-1).